Consider the following 195-residue polypeptide: Small ribosomal subunit protein uS7 (195 aa).

It belongs to the universal ribosomal protein uS7 family. Part of the 30S ribosomal subunit.

In terms of biological role, one of the primary rRNA binding proteins, it binds directly to 16S rRNA where it nucleates assembly of the head domain of the 30S subunit. Is located at the subunit interface close to the decoding center. This is Small ribosomal subunit protein uS7 from Sulfolobus acidocaldarius (strain ATCC 33909 / DSM 639 / JCM 8929 / NBRC 15157 / NCIMB 11770).